The primary structure comprises 793 residues: Phenylalanine--tRNA ligase beta subunit (793 aa).

The tRNA-binding domain maps to 39–154 (TCSFSSIITA…ENTPLGESAC (116 aa)). One can recognise a B5 domain in the interval 403–481 (PQASTLSFRT…QPWKVENKKA (79 aa)). Residues D457, D463, E466, and E467 each coordinate Mg(2+). The 97-residue stretch at 697–793 (PIYPSSFRDI…QINDTKGTID (97 aa)) folds into the FDX-ACB domain.

It belongs to the phenylalanyl-tRNA synthetase beta subunit family. Type 1 subfamily. Tetramer of two alpha and two beta subunits. It depends on Mg(2+) as a cofactor.

It localises to the cytoplasm. It catalyses the reaction tRNA(Phe) + L-phenylalanine + ATP = L-phenylalanyl-tRNA(Phe) + AMP + diphosphate + H(+). This chain is Phenylalanine--tRNA ligase beta subunit, found in Chlamydia caviae (strain ATCC VR-813 / DSM 19441 / 03DC25 / GPIC) (Chlamydophila caviae).